The sequence spans 284 residues: MTAQLIDGKSIAASLRQQIAQRVAERRQQGLRTPGLAVILVGSDPASQVYVSHKRKDCEEVGFLSQAYDLPSETTQEALTDLIDRLNDDPAIDGVLLQLPLPEHLDASKLLERIRPDKDVDGFHPYNVGRLAQRIPLLRPCTPKGIMTLLESTGADLYGMDAVVVGASNIVGRPMAMELLLAGCTVTVTHRFTKDLAGHVGRADLVVVAAGKPGLVKGEWIKEGAIVIDVGINRQEDGKLVGDVVYETALPRAGWITPVPGGVGPMTRACLLENTLYAAETLHA.

NADP(+) is bound by residues 166 to 168 (GAS) and isoleucine 232.

It belongs to the tetrahydrofolate dehydrogenase/cyclohydrolase family. In terms of assembly, homodimer.

The enzyme catalyses (6R)-5,10-methylene-5,6,7,8-tetrahydrofolate + NADP(+) = (6R)-5,10-methenyltetrahydrofolate + NADPH. It carries out the reaction (6R)-5,10-methenyltetrahydrofolate + H2O = (6R)-10-formyltetrahydrofolate + H(+). It functions in the pathway one-carbon metabolism; tetrahydrofolate interconversion. Its function is as follows. Catalyzes the oxidation of 5,10-methylenetetrahydrofolate to 5,10-methenyltetrahydrofolate and then the hydrolysis of 5,10-methenyltetrahydrofolate to 10-formyltetrahydrofolate. This chain is Bifunctional protein FolD, found in Pseudomonas fluorescens (strain Pf0-1).